The following is a 582-amino-acid chain: uncharacterized protein (582 aa).

Positions 1–23 (MAHEGSRQVRDRGVTRSKAEKVR) are enriched in basic and acidic residues. Disordered stretches follow at residues 1-29 (MAHE…TVPV), 110-133 (AVAE…SWAQ), and 147-221 (LENF…SSAG). Ser242 is modified (phosphoserine). Disordered regions lie at residues 310–331 (RPSA…SAHH) and 551–582 (LSSG…PKPR). Residues 311-320 (PSASCQQQRA) are compositionally biased toward polar residues.

This is an uncharacterized protein from Homo sapiens (Human).